The sequence spans 233 residues: DNA repair protein RecO (233 aa).

It belongs to the RecO family.

Involved in DNA repair and RecF pathway recombination. This Psychromonas ingrahamii (strain DSM 17664 / CCUG 51855 / 37) protein is DNA repair protein RecO.